Reading from the N-terminus, the 320-residue chain is MRSAQVYRWQIPMDAGVVLRDRRLKTRDGLYVCLREGECEGWGEISPLPGFSQETWEEAQCVLLAWVNNWLAGDCELPQMPSVAFGVSCALAELADTLPQAANFRAAPLCNGDPDDLILKLADMPGEKVAKVKVGLYEAVRDGMVVNLLLEAIPDLHLRLDANRAWTPLKGQQFAKYVNPDYRGRIAFLEEPCKTREDSRAFARETGIAIAWDESLREPDFAFVAEEGVRAVVIKPTLTGSLEKVHEQVQAAHALGLTAVISSSIESSLGLTQLARIAAWLTPDTIPGLDTLDLMQAQQVRRWPGSTLPFVDVDALERLL.

Lys133 (proton donor) is an active-site residue. Mg(2+)-binding residues include Asp161, Glu190, and Asp213. Lys235 functions as the Proton acceptor in the catalytic mechanism.

The protein belongs to the mandelate racemase/muconate lactonizing enzyme family. MenC type 1 subfamily. It depends on a divalent metal cation as a cofactor.

The enzyme catalyses (1R,6R)-6-hydroxy-2-succinyl-cyclohexa-2,4-diene-1-carboxylate = 2-succinylbenzoate + H2O. The protein operates within quinol/quinone metabolism; 1,4-dihydroxy-2-naphthoate biosynthesis; 1,4-dihydroxy-2-naphthoate from chorismate: step 4/7. Its pathway is quinol/quinone metabolism; menaquinone biosynthesis. Converts 2-succinyl-6-hydroxy-2,4-cyclohexadiene-1-carboxylate (SHCHC) to 2-succinylbenzoate (OSB). In Escherichia fergusonii (strain ATCC 35469 / DSM 13698 / CCUG 18766 / IAM 14443 / JCM 21226 / LMG 7866 / NBRC 102419 / NCTC 12128 / CDC 0568-73), this protein is o-succinylbenzoate synthase.